A 58-amino-acid chain; its full sequence is Ribulose bisphosphate carboxylase large chain (58 aa).

Positions 1–2 (MS) are excised as a propeptide. Residue P3 is modified to N-acetylproline. N6,N6,N6-trimethyllysine is present on K14.

The protein belongs to the RuBisCO large chain family. Type I subfamily. Heterohexadecamer of 8 large chains and 8 small chains.

The protein localises to the plastid. It is found in the chloroplast. It carries out the reaction 2 (2R)-3-phosphoglycerate + 2 H(+) = D-ribulose 1,5-bisphosphate + CO2 + H2O. The catalysed reaction is D-ribulose 1,5-bisphosphate + O2 = 2-phosphoglycolate + (2R)-3-phosphoglycerate + 2 H(+). In terms of biological role, ruBisCO catalyzes two reactions: the carboxylation of D-ribulose 1,5-bisphosphate, the primary event in carbon dioxide fixation, as well as the oxidative fragmentation of the pentose substrate in the photorespiration process. Both reactions occur simultaneously and in competition at the same active site. This is Ribulose bisphosphate carboxylase large chain (rbcL) from Weinmannia silvicola (Towai).